A 202-amino-acid chain; its full sequence is Cytochrome c biogenesis ATP-binding export protein CcmA (202 aa).

Residues 3–200 form the ABC transporter domain; the sequence is LAAENLSGER…EGTQELKMGA (198 aa). Residue 35 to 42 coordinates ATP; that stretch reads GPNGAGKS.

This sequence belongs to the ABC transporter superfamily. CcmA exporter (TC 3.A.1.107) family. As to quaternary structure, the complex is composed of two ATP-binding proteins (CcmA) and two transmembrane proteins (CcmB).

The protein resides in the cell inner membrane. The enzyme catalyses heme b(in) + ATP + H2O = heme b(out) + ADP + phosphate + H(+). Functionally, part of the ABC transporter complex CcmAB involved in the biogenesis of c-type cytochromes; once thought to export heme, this seems not to be the case, but its exact role is uncertain. Responsible for energy coupling to the transport system. The sequence is that of Cytochrome c biogenesis ATP-binding export protein CcmA from Chelativorans sp. (strain BNC1).